Reading from the N-terminus, the 117-residue chain is Immunity protein BC_0921 (117 aa).

As to quaternary structure, probably interacts with cognate toxin BC_0920 but not with other non-cognate toxins. The interaction inhibits the toxic activity of BC_0920.

The protein localises to the cytoplasm. In terms of biological role, immunity component of an LXG toxin-immunity module. Neutralizes the RNase activity of cognate toxin BC_0920. Probably does not have immunity protein activity on other toxins with the LXG domain. In Bacillus cereus (strain ATCC 14579 / DSM 31 / CCUG 7414 / JCM 2152 / NBRC 15305 / NCIMB 9373 / NCTC 2599 / NRRL B-3711), this protein is Immunity protein BC_0921.